Consider the following 304-residue polypeptide: GTPase Era (304 aa).

The Era-type G domain occupies 11 to 179 (YCGFIAIVGR…QKIVRKSLRE (169 aa)). Residues 19–26 (GRPNVGKS) form a G1 region. GTP is bound at residue 19-26 (GRPNVGKS). Residues 45–49 (QTTRH) are G2. The tract at residues 66–69 (DTPG) is G3. Residues 66–70 (DTPGL) and 128–131 (NKVD) each bind GTP. Positions 128 to 131 (NKVD) are G4. A G5 region spans residues 158-160 (ISA). The region spanning 210 to 287 (TGEELPYSVT…HLELWVKVKA (78 aa)) is the KH type-2 domain.

The protein belongs to the TRAFAC class TrmE-Era-EngA-EngB-Septin-like GTPase superfamily. Era GTPase family. In terms of assembly, monomer.

It is found in the cytoplasm. The protein localises to the cell inner membrane. Its function is as follows. An essential GTPase that binds both GDP and GTP, with rapid nucleotide exchange. Plays a role in 16S rRNA processing and 30S ribosomal subunit biogenesis and possibly also in cell cycle regulation and energy metabolism. This is GTPase Era from Actinobacillus pleuropneumoniae serotype 3 (strain JL03).